The following is a 66-amino-acid chain: Large ribosomal subunit protein bL31 (66 aa).

Residues cysteine 16, cysteine 18, cysteine 36, and cysteine 39 each contribute to the Zn(2+) site.

It belongs to the bacterial ribosomal protein bL31 family. Type A subfamily. As to quaternary structure, part of the 50S ribosomal subunit. Requires Zn(2+) as cofactor.

In terms of biological role, binds the 23S rRNA. The chain is Large ribosomal subunit protein bL31 from Anoxybacillus flavithermus (strain DSM 21510 / WK1).